Reading from the N-terminus, the 181-residue chain is Neuroblastoma suppressor of tumorigenicity 1 (181 aa).

Positions 1–16 are cleaved as a signal peptide; that stretch reads MMLRVLVGAVLPAMLL. 5 disulfide bridges follow: C35/C85, C49/C99, C59/C118, C63/C120, and C82/C123. Residues 35 to 124 form the CTCK domain; it reads CEAKNITQIV…ILHCSCQACG (90 aa). The segment at 132 to 181 is disordered; it reads LSVYVQGEDGPGSQPGTHPHPHPHPHPGGQTPEPEDPPGAPHTEEEGAED.

It belongs to the DAN family. Homodimer. Most abundant in normal lung and meningioma.

The protein localises to the secreted. Possible candidate as a tumor suppressor gene of neuroblastoma. May play an important role in preventing cells from entering the final stage (G1/S) of the transformation process. The protein is Neuroblastoma suppressor of tumorigenicity 1 (NBL1) of Homo sapiens (Human).